A 202-amino-acid polypeptide reads, in one-letter code: Dephospho-CoA kinase (202 aa).

The 197-residue stretch at 6 to 202 (KISVTGDPSS…QCFKALKGTI (197 aa)) folds into the DPCK domain. 14-19 (SSGKTE) serves as a coordination point for ATP.

The protein belongs to the CoaE family.

The protein resides in the cytoplasm. It catalyses the reaction 3'-dephospho-CoA + ATP = ADP + CoA + H(+). It functions in the pathway cofactor biosynthesis; coenzyme A biosynthesis; CoA from (R)-pantothenate: step 5/5. Catalyzes the phosphorylation of the 3'-hydroxyl group of dephosphocoenzyme A to form coenzyme A. The polypeptide is Dephospho-CoA kinase (Chlamydia trachomatis serovar D (strain ATCC VR-885 / DSM 19411 / UW-3/Cx)).